Consider the following 279-residue polypeptide: HTH-type transcriptional regulator HdfR (279 aa).

The 58-residue stretch at 1–58 (MDTELLKTFLEVSRTRHFGRAAESLYLTQSAVSFRIRQLENQLGVNLFTRHRNNIRLT) folds into the HTH lysR-type domain. The segment at residues 18-37 (FGRAAESLYLTQSAVSFRIR) is a DNA-binding region (H-T-H motif).

This sequence belongs to the LysR transcriptional regulatory family.

In terms of biological role, negatively regulates the transcription of the flagellar master operon flhDC by binding to the upstream region of the operon. The protein is HTH-type transcriptional regulator HdfR of Escherichia coli O6:K15:H31 (strain 536 / UPEC).